The following is a 128-amino-acid chain: Virion-associated protein (128 aa).

Coiled coils occupy residues 1–30 (MNLA…ILAK) and 37–58 (ESSN…EMKE). The disordered stretch occupies residues 98–128 (FDVGNEGMGSSTNPNALKWPPTEKPQPWPPR). Residues 119–128 (TEKPQPWPPR) are compositionally biased toward pro residues. The capsid binding stretch occupies residues 122-128 (PQPWPPR).

Belongs to the caulimovirus ORF III family. In terms of assembly, homotetramer, through coiled-coil domain. Homotrimer when interacts with icosehadral capsid. Interacts with capsid protein, and with Movement protein.

Its subcellular location is the virion. The protein localises to the host cell junction. The protein resides in the host plasmodesma. In terms of biological role, plays a role in virus cell-to-cell and plant-to-plant transmission. Interacts with virion icosahedral capsid and movement protein, thereby facilitating virion cell-to-cell transmission through plasmodesmata opened by viral movement protein. Also interacts with aphid transmission factor, attaching the virion to aphid stylet when the animal feeds on an virus infected plant. Aphid saliva may later detach the virion, inducing release of infectious particles when the animal feeds on a new plant. The polypeptide is Virion-associated protein (Carnation etched ring virus (CERV)).